The following is a 464-amino-acid chain: ATP-dependent protease ATPase subunit HslU (464 aa).

Residues Val18, 60 to 65 (GVGKTE), Asp277, Glu342, and Arg414 contribute to the ATP site.

Belongs to the ClpX chaperone family. HslU subfamily. As to quaternary structure, a double ring-shaped homohexamer of HslV is capped on each side by a ring-shaped HslU homohexamer. The assembly of the HslU/HslV complex is dependent on binding of ATP.

It is found in the cytoplasm. Functionally, ATPase subunit of a proteasome-like degradation complex; this subunit has chaperone activity. The binding of ATP and its subsequent hydrolysis by HslU are essential for unfolding of protein substrates subsequently hydrolyzed by HslV. HslU recognizes the N-terminal part of its protein substrates and unfolds these before they are guided to HslV for hydrolysis. The polypeptide is ATP-dependent protease ATPase subunit HslU (Lactobacillus delbrueckii subsp. bulgaricus (strain ATCC 11842 / DSM 20081 / BCRC 10696 / JCM 1002 / NBRC 13953 / NCIMB 11778 / NCTC 12712 / WDCM 00102 / Lb 14)).